A 1591-amino-acid polypeptide reads, in one-letter code: Mediator of RNA polymerase II transcription subunit 12 (1591 aa).

3 disordered regions span residues 1–116 (MIPH…LSWR), 132–176 (GAGE…AAGL), and 1488–1530 (NATL…SLGV). Residues 40–53 (EQSSMPAPQPQTGP) are compositionally biased toward polar residues. The span at 66–80 (AQEREHPAKRLRLDI) shows a compositional bias: basic and acidic residues. The span at 99-108 (PKSTPVSTSS) shows a compositional bias: low complexity. The segment covering 151–162 (LSPPSFPAPPWK) has biased composition (pro residues). The segment covering 1496–1512 (PSPAASGSTPAPTPSGS) has biased composition (low complexity).

The protein belongs to the Mediator complex subunit 12 family. In terms of assembly, component of the srb8-11 complex, which itself associates with the Mediator complex.

It is found in the nucleus. In terms of biological role, component of the srb8-11 complex. The srb8-11 complex is a regulatory module of the Mediator complex which is itself involved in regulation of basal and activated RNA polymerase II-dependent transcription. The srb8-11 complex may be involved in the transcriptional repression of a subset of genes regulated by Mediator. It may inhibit the association of the Mediator complex with RNA polymerase II to form the holoenzyme complex. The polypeptide is Mediator of RNA polymerase II transcription subunit 12 (srb8) (Aspergillus clavatus (strain ATCC 1007 / CBS 513.65 / DSM 816 / NCTC 3887 / NRRL 1 / QM 1276 / 107)).